A 129-amino-acid chain; its full sequence is Small ribosomal subunit protein uS11 (129 aa).

It belongs to the universal ribosomal protein uS11 family. In terms of assembly, part of the 30S ribosomal subunit. Interacts with proteins S7 and S18. Binds to IF-3.

Functionally, located on the platform of the 30S subunit, it bridges several disparate RNA helices of the 16S rRNA. Forms part of the Shine-Dalgarno cleft in the 70S ribosome. The polypeptide is Small ribosomal subunit protein uS11 (Caulobacter vibrioides (strain ATCC 19089 / CIP 103742 / CB 15) (Caulobacter crescentus)).